The chain runs to 275 residues: Large ribosomal subunit protein uL2 (275 aa).

Disordered regions lie at residues 1 to 24 (MGIR…FSEI) and 208 to 275 (AGRT…RRRR). The segment covering 12–22 (GTRQATVSDFS) has biased composition (polar residues). 2 stretches are compositionally biased toward basic residues: residues 208–219 (AGRTRHLGRRPQ) and 255–275 (LGKK…RRRR).

It belongs to the universal ribosomal protein uL2 family. In terms of assembly, part of the 50S ribosomal subunit. Forms a bridge to the 30S subunit in the 70S ribosome.

Its function is as follows. One of the primary rRNA binding proteins. Required for association of the 30S and 50S subunits to form the 70S ribosome, for tRNA binding and peptide bond formation. It has been suggested to have peptidyltransferase activity; this is somewhat controversial. Makes several contacts with the 16S rRNA in the 70S ribosome. The protein is Large ribosomal subunit protein uL2 of Picosynechococcus sp. (strain ATCC 27264 / PCC 7002 / PR-6) (Agmenellum quadruplicatum).